Here is a 114-residue protein sequence, read N- to C-terminus: Chaperonin GroEL (114 aa).

Asp-22–Thr-26 provides a ligand contact to ATP.

It belongs to the chaperonin (HSP60) family. In terms of assembly, forms a cylinder of 14 subunits composed of two heptameric rings stacked back-to-back. Interacts with the co-chaperonin GroES.

The protein localises to the cytoplasm. It catalyses the reaction ATP + H2O + a folded polypeptide = ADP + phosphate + an unfolded polypeptide.. Its function is as follows. Together with its co-chaperonin GroES, plays an essential role in assisting protein folding. The GroEL-GroES system forms a nano-cage that allows encapsulation of the non-native substrate proteins and provides a physical environment optimized to promote and accelerate protein folding. The polypeptide is Chaperonin GroEL (Mycobacterium ulcerans).